We begin with the raw amino-acid sequence, 466 residues long: Exodeoxyribonuclease 7 large subunit (466 aa).

Belongs to the XseA family. In terms of assembly, heterooligomer composed of large and small subunits.

The protein localises to the cytoplasm. It carries out the reaction Exonucleolytic cleavage in either 5'- to 3'- or 3'- to 5'-direction to yield nucleoside 5'-phosphates.. Bidirectionally degrades single-stranded DNA into large acid-insoluble oligonucleotides, which are then degraded further into small acid-soluble oligonucleotides. The chain is Exodeoxyribonuclease 7 large subunit from Vesicomyosocius okutanii subsp. Calyptogena okutanii (strain HA).